A 65-amino-acid polypeptide reads, in one-letter code: Large ribosomal subunit protein bL35 (65 aa).

The protein belongs to the bacterial ribosomal protein bL35 family.

The polypeptide is Large ribosomal subunit protein bL35 (Heliobacterium modesticaldum (strain ATCC 51547 / Ice1)).